A 61-amino-acid chain; its full sequence is Large ribosomal subunit protein bL32 (61 aa).

Positions 1-10 are enriched in basic residues; that stretch reads MAQPKKKTSN. Residues 1–23 are disordered; sequence MAQPKKKTSNAKRDQRRATWKRK.

Belongs to the bacterial ribosomal protein bL32 family.

The sequence is that of Large ribosomal subunit protein bL32 from Gloeobacter violaceus (strain ATCC 29082 / PCC 7421).